The sequence spans 270 residues: Probable ribosomal RNA small subunit methyltransferase A (270 aa).

S-adenosyl-L-methionine is bound by residues His19, Leu21, Gly46, Glu67, Asp92, and Asn107.

It belongs to the class I-like SAM-binding methyltransferase superfamily. rRNA adenine N(6)-methyltransferase family. RsmA subfamily.

It is found in the cytoplasm. In terms of biological role, specifically dimethylates two adjacent adenosines in the loop of a conserved hairpin near the 3'-end of 16S rRNA in the 30S particle. May play a critical role in biogenesis of 30S subunits. The protein is Probable ribosomal RNA small subunit methyltransferase A of Methanococcoides burtonii (strain DSM 6242 / NBRC 107633 / OCM 468 / ACE-M).